Reading from the N-terminus, the 406-residue chain is Probable tRNA pseudouridine synthase D (406 aa).

Catalysis depends on Asp77, which acts as the Nucleophile. In terms of domain architecture, TRUD spans 150–371 (GFPNYFGIQR…PGGRRELLIK (222 aa)).

Belongs to the pseudouridine synthase TruD family.

The enzyme catalyses uridine(13) in tRNA = pseudouridine(13) in tRNA. Could be responsible for synthesis of pseudouridine from uracil-13 in transfer RNAs. The protein is Probable tRNA pseudouridine synthase D of Pyrococcus abyssi (strain GE5 / Orsay).